The following is a 455-amino-acid chain: uncharacterized protein (455 aa).

Positions 1 to 24 are cleaved as a signal peptide; that stretch reads MKTTKILLHTGVLALSLLATQVMA.

This is an uncharacterized protein from Pseudomonas aeruginosa (strain ATCC 15692 / DSM 22644 / CIP 104116 / JCM 14847 / LMG 12228 / 1C / PRS 101 / PAO1).